The primary structure comprises 210 residues: Acetoin utilization protein AcuA (210 aa).

Residues leucine 20–asparagine 161 enclose the N-acetyltransferase domain.

This sequence belongs to the acetyltransferase family. In terms of assembly, monomer.

Its pathway is ketone degradation; acetoin degradation. Its activity is regulated as follows. Activity is sensitive to salt concentration, a high concentration of KCL (500 mM) is needed for complete inactivation. In terms of biological role, part of the acuABC operon, which is possibly involved in the breakdown of acetoin and butanediol. Acts as an acetyltransferase inactivating acetyl-CoA synthetase AcsA via acetylation at a Lys residue. This Bacillus subtilis (strain 168) protein is Acetoin utilization protein AcuA (acuA).